A 76-amino-acid chain; its full sequence is uncharacterized protein (76 aa).

The tract at residues 27–76 (SINNGEGSSVVHRDATAPPTPPVVPTSTLQVPGLQRARTPEPNDPRVANL) is disordered.

This is an uncharacterized protein from Caenorhabditis elegans.